A 238-amino-acid polypeptide reads, in one-letter code: Survival of motor neuron-related-splicing factor 30 (238 aa).

The 61-residue stretch at 72 to 132 (SWKVGDKCMA…KPVEEGRKAK (61 aa)) folds into the Tudor domain. The Nuclear localization signal signature appears at 142-160 (KKEMIAQQREYKKKKALKK). Position 201 is a phosphoserine (Ser-201). An N6-acetyllysine modification is found at Lys-219.

It belongs to the SMN family. In terms of assembly, associates with spliceosomes. Associates with U4/U5/U6 tri-snRNP and with U2 snRNP. Interacts (via Tudor domain) with SNRPD3 (via C-terminus); the interaction is direct. Detected at intermediate levels in skeletal muscle, and at low levels in heart and pancreas.

Its subcellular location is the nucleus speckle. The protein resides in the nucleus. It is found in the cajal body. In terms of biological role, involved in spliceosome assembly. This chain is Survival of motor neuron-related-splicing factor 30 (SMNDC1), found in Homo sapiens (Human).